A 226-amino-acid polypeptide reads, in one-letter code: tRNA (guanine-N(7)-)-methyltransferase (226 aa).

S-adenosyl-L-methionine is bound by residues D59, E84, and D111. Residue D169 participates in substrate binding.

The protein belongs to the class I-like SAM-binding methyltransferase superfamily. TrmB family.

The catalysed reaction is guanosine(46) in tRNA + S-adenosyl-L-methionine = N(7)-methylguanosine(46) in tRNA + S-adenosyl-L-homocysteine. The protein operates within tRNA modification; N(7)-methylguanine-tRNA biosynthesis. Catalyzes the formation of N(7)-methylguanine at position 46 (m7G46) in tRNA. This is tRNA (guanine-N(7)-)-methyltransferase from Chloroherpeton thalassium (strain ATCC 35110 / GB-78).